Here is a 116-residue protein sequence, read N- to C-terminus: Large ribosomal subunit protein bL17 (116 aa).

The protein belongs to the bacterial ribosomal protein bL17 family. Part of the 50S ribosomal subunit. Contacts protein L32.

The sequence is that of Large ribosomal subunit protein bL17 from Thermosynechococcus vestitus (strain NIES-2133 / IAM M-273 / BP-1).